The following is a 525-amino-acid chain: Vanin-like protein 2 (525 aa).

Residues M1–L27 form the signal peptide. Residues N20 and N61 are each glycosylated (N-linked (GlcNAc...) asparagine). One can recognise a CN hydrolase domain in the interval Y33–K303. The active-site Proton acceptor is the E72. N-linked (GlcNAc...) asparagine glycans are attached at residues N99, N116, and N124. Residue K167 is the Proton donor of the active site. N176 carries N-linked (GlcNAc...) asparagine glycosylation. C199 serves as the catalytic Nucleophile. Residues N333, N348, and N375 are each glycosylated (N-linked (GlcNAc...) asparagine).

It belongs to the carbon-nitrogen hydrolase superfamily. BTD/VNN family. As to expression, expressed in third instar larvae.

Its subcellular location is the secreted. The polypeptide is Vanin-like protein 2 (Drosophila melanogaster (Fruit fly)).